The sequence spans 104 residues: 11 kDa late embryogenesis abundant protein (104 aa).

Over residues Met-1–Ala-24 the composition is skewed to low complexity. A disordered region spans residues Met-1–Ile-104. Residues Gly-25 to Ala-74 are compositionally biased toward basic and acidic residues. Positions Ala-75–Tyr-89 are enriched in polar residues.

Belongs to the LEA type 1 family. In terms of tissue distribution, maximally expressed in dry seeds. Also present in mid-maturation embryos.

In terms of biological role, LEA proteins are late embryonic proteins abundant in higher plant seed embryos. They may play an essential role in seed survival and in controlling water exchanges during seed desiccation and imbibition. This Helianthus annuus (Common sunflower) protein is 11 kDa late embryogenesis abundant protein.